We begin with the raw amino-acid sequence, 497 residues long: Protein root UVB sensitive 6 (497 aa).

Belongs to the RUS1 family.

In terms of biological role, required for normal embryo development. In Arabidopsis thaliana (Mouse-ear cress), this protein is Protein root UVB sensitive 6.